The sequence spans 455 residues: Ribulose bisphosphate carboxylase large chain (455 aa).

The residue at position 5 (Lys5) is an N6,N6,N6-trimethyllysine. Asn114 and Thr164 together coordinate substrate. The active-site Proton acceptor is the Lys166. Lys168 is a substrate binding site. 3 residues coordinate Mg(2+): Lys192, Asp194, and Glu195. Lys192 is modified (N6-carboxylysine). The active-site Proton acceptor is the His285. Positions 286, 318, and 370 each coordinate substrate.

The protein belongs to the RuBisCO large chain family. Type I subfamily. In terms of assembly, heterohexadecamer of 8 large chains and 8 small chains; disulfide-linked. The disulfide link is formed within the large subunit homodimers. The cofactor is Mg(2+). In terms of processing, the disulfide bond which can form in the large chain dimeric partners within the hexadecamer appears to be associated with oxidative stress and protein turnover.

It localises to the plastid. Its subcellular location is the chloroplast. It carries out the reaction 2 (2R)-3-phosphoglycerate + 2 H(+) = D-ribulose 1,5-bisphosphate + CO2 + H2O. The catalysed reaction is D-ribulose 1,5-bisphosphate + O2 = 2-phosphoglycolate + (2R)-3-phosphoglycerate + 2 H(+). Functionally, ruBisCO catalyzes two reactions: the carboxylation of D-ribulose 1,5-bisphosphate, the primary event in carbon dioxide fixation, as well as the oxidative fragmentation of the pentose substrate in the photorespiration process. Both reactions occur simultaneously and in competition at the same active site. This chain is Ribulose bisphosphate carboxylase large chain, found in Lupinus digitatus (Lupine).